Consider the following 232-residue polypeptide: Sugar fermentation stimulation protein homolog (232 aa).

Belongs to the SfsA family.

The chain is Sugar fermentation stimulation protein homolog from Alkaliphilus metalliredigens (strain QYMF).